A 161-amino-acid polypeptide reads, in one-letter code: Large ribosomal subunit protein uL29c (161 aa).

The transit peptide at Met-1 to Met-61 directs the protein to the chloroplast.

Belongs to the universal ribosomal protein uL29 family. Part of the 50S ribosomal subunit.

It localises to the plastid. The protein resides in the chloroplast. The sequence is that of Large ribosomal subunit protein uL29c (RPL29) from Zea mays (Maize).